Consider the following 568-residue polypeptide: Kelch-like protein 12 (568 aa).

The region spanning 33-100 is the BTB domain; it reads CDVTLRVEQK…VYTETVHVTV (68 aa). The BACK domain maps to 135-236; it reads CLGIRDFAET…LTPRYITDVI (102 aa). Kelch repeat units follow at residues 282 to 329, 331 to 379, 380 to 426, 427 to 473, 475 to 520, and 522 to 567; these read VLLV…SLHD, IYVI…TLGD, MIYV…VASG, VIYC…LLND, IYVV…VLRG, and LYAI…VLRE. Residues 405–568 are interaction with DVL3; it reads QWSMLGDMQT…DAGVCVLREK (164 aa).

Component of the BCR(KLHL12) E3 ubiquitin ligase complex, at least composed of CUL3 and KLHL12 and RBX1. This complex interacts with DVL3 upon activation of the Wnt signaling pathway by WNT3A. Interacts with DRD4, KLHL2 and SEC31A. Interacts with PEF1 and PDCD6/ALG-2; interaction takes place in response to cytosolic calcium increase and leads to bridge together the BCR(KLHL12) complex and SEC31 (SEC31A or SEC31B). Post-translationally, ubiquitinated by the SCF(FBXL17) complex, leading to its degradation by the proteasome: ubiquitination by the SCF(FBXL17) complex takes place when aberrant BTB domain dimers are formed. In terms of tissue distribution, ubiquitously expressed. Highly expressed in testis and at lower levels in the submandibular salivary gland.

It localises to the cytoplasmic vesicle. The protein localises to the COPII-coated vesicle. The protein operates within protein modification; protein ubiquitination. Its function is as follows. Substrate-specific adapter of a BCR (BTB-CUL3-RBX1) E3 ubiquitin ligase complex that acts as a negative regulator of Wnt signaling pathway and ER-Golgi transport. The BCR(KLHL12) complex is involved in ER-Golgi transport by regulating the size of COPII coats, thereby playing a key role in collagen export, which is required for embryonic stem (ES) cells division: BCR(KLHL12) acts by mediating monoubiquitination of SEC31 (SEC31A or SEC31B). The BCR(KLHL12) complex is also involved in neural crest specification: in response to cytosolic calcium increase, interacts with the heterodimer formed with PEF1 and PDCD6/ALG-2, leading to bridge together the BCR(KLHL12) complex and SEC31 (SEC31A or SEC31B), promoting monoubiquitination of SEC31 and subsequent collagen export. As part of the BCR(KLHL12) complex, also acts as a negative regulator of the Wnt signaling pathway by mediating ubiquitination and subsequent proteolysis of DVL3. The BCR(KLHL12) complex also mediates polyubiquitination of DRD4 and PEF1, without leading to degradation of these proteins. The sequence is that of Kelch-like protein 12 (KLHL12) from Homo sapiens (Human).